Reading from the N-terminus, the 215-residue chain is ATP-dependent Clp protease proteolytic subunit 3 (215 aa).

The active-site Nucleophile is the Ser119. Residue His144 is part of the active site.

Belongs to the peptidase S14 family. In terms of assembly, fourteen ClpP subunits assemble into 2 heptameric rings which stack back to back to give a disk-like structure with a central cavity, resembling the structure of eukaryotic proteasomes.

The protein localises to the cytoplasm. It catalyses the reaction Hydrolysis of proteins to small peptides in the presence of ATP and magnesium. alpha-casein is the usual test substrate. In the absence of ATP, only oligopeptides shorter than five residues are hydrolyzed (such as succinyl-Leu-Tyr-|-NHMec, and Leu-Tyr-Leu-|-Tyr-Trp, in which cleavage of the -Tyr-|-Leu- and -Tyr-|-Trp bonds also occurs).. Functionally, cleaves peptides in various proteins in a process that requires ATP hydrolysis. Has a chymotrypsin-like activity. Plays a major role in the degradation of misfolded proteins. The polypeptide is ATP-dependent Clp protease proteolytic subunit 3 (Prochlorococcus marinus subsp. pastoris (strain CCMP1986 / NIES-2087 / MED4)).